Reading from the N-terminus, the 103-residue chain is MQPNDITFFQRFQNDILAGRKTITIRDASESHFKAGDVLRVGRFEDDGYFCTIEVTGTSTVTLDTLNEKHAQQENMSLDELKRVIAEIYPNQTQFYVIDFKCL.

An ASCH domain is found at 6–94 (ITFFQRFQND…IAEIYPNQTQ (89 aa)). The Proton acceptor role is filled by Lys21. The active-site Nucleophile is Thr24. The active-site Proton donor is Glu74.

Belongs to the N(4)-acetylcytidine amidohydrolase family.

The enzyme catalyses N(4)-acetylcytidine + H2O = cytidine + acetate + H(+). The catalysed reaction is N(4)-acetyl-2'-deoxycytidine + H2O = 2'-deoxycytidine + acetate + H(+). It catalyses the reaction N(4)-acetylcytosine + H2O = cytosine + acetate + H(+). In terms of biological role, catalyzes the hydrolysis of N(4)-acetylcytidine (ac4C). This Salmonella heidelberg (strain SL476) protein is N(4)-acetylcytidine amidohydrolase (yqfB).